A 155-amino-acid chain; its full sequence is MKLLVLCLFAMMATLAVSRHRFRFIPHKYIRKEFEVALKVEIIAGFDRTLVKWLRVHGGRLSTVQKKALYFVNRRYMQTHWQNYMLWIVRKTDALGRPPVVADYSRLGAEIGRRIDMAYFYNFLNGRNMIPKYLPYMEEINRMRPADVPVANRGK.

An N-terminal signal peptide occupies residues 1–18; the sequence is MKLLVLCLFAMMATLAVS.

In terms of assembly, monomer. Homodimer. Molecules associate into dimers and then rapidly dissociate again. Interacts (as a monomer) with the egg vitelline layer protein VERL (via VERL repeats); each VERL chain can bind multiple copies of lysin. Sperm (at protein level).

The protein localises to the cytoplasmic vesicle. The protein resides in the secretory vesicle. It is found in the acrosome lumen. Functionally, creates a 3 um hole in the egg vitelline layer through which the sperm passes. Does not have enzyme activity. Species-specific interaction between the sperm protein lysin and the egg protein VERL exposes a basic surface on lysin that may dissociate the egg vitelline layer via electrostatic repulsion. Plays a role in ensuring species-specific fertilization. This is Egg-lysin from Haliotis corrugata (Pink abalone).